Here is an 82-residue protein sequence, read N- to C-terminus: Small ribosomal subunit protein uS17 (82 aa).

Belongs to the universal ribosomal protein uS17 family. Part of the 30S ribosomal subunit.

Its function is as follows. One of the primary rRNA binding proteins, it binds specifically to the 5'-end of 16S ribosomal RNA. The chain is Small ribosomal subunit protein uS17 from Rickettsia rickettsii (strain Iowa).